We begin with the raw amino-acid sequence, 601 residues long: Glutamine--fructose-6-phosphate aminotransferase [isomerizing] (601 aa).

Cys2 acts as the Nucleophile; for GATase activity in catalysis. Residues 2–218 (CGIVGYIGYD…DHEIVIVKKD (217 aa)) form the Glutamine amidotransferase type-2 domain. SIS domains follow at residues 284-423 (IIND…EHGR) and 453-591 (IATD…VDKP). The active-site For Fru-6P isomerization activity is Lys596.

Homodimer.

The protein resides in the cytoplasm. It catalyses the reaction D-fructose 6-phosphate + L-glutamine = D-glucosamine 6-phosphate + L-glutamate. Functionally, catalyzes the first step in hexosamine metabolism, converting fructose-6P into glucosamine-6P using glutamine as a nitrogen source. The chain is Glutamine--fructose-6-phosphate aminotransferase [isomerizing] from Staphylococcus aureus (strain Mu50 / ATCC 700699).